A 107-amino-acid chain; its full sequence is Flagellar transcriptional regulator FlhD (107 aa).

It belongs to the FlhD family. Homodimer; disulfide-linked. Forms a heterohexamer composed of two FlhC and four FlhD subunits. Each FlhC binds a FlhD dimer, forming a heterotrimer, and a hexamer assembles by dimerization of two heterotrimers.

It is found in the cytoplasm. Its function is as follows. Functions in complex with FlhC as a master transcriptional regulator that regulates transcription of several flagellar and non-flagellar operons by binding to their promoter region. Activates expression of class 2 flagellar genes, including fliA, which is a flagellum-specific sigma factor that turns on the class 3 genes. Also regulates genes whose products function in a variety of physiological pathways. The polypeptide is Flagellar transcriptional regulator FlhD (Bordetella avium (strain 197N)).